We begin with the raw amino-acid sequence, 331 residues long: Hyaluronidase A (331 aa).

Disulfide bonds link cysteine 19/cysteine 308 and cysteine 185/cysteine 197. N-linked (GlcNAc...) asparagine glycans are attached at residues asparagine 79 and asparagine 99. Glutamate 109 serves as the catalytic Proton donor. An N-linked (GlcNAc...) asparagine glycan is attached at asparagine 127. Residue asparagine 325 is glycosylated (N-linked (GlcNAc...) asparagine).

The protein belongs to the glycosyl hydrolase 56 family. Expressed by the venom gland.

It localises to the secreted. It carries out the reaction Random hydrolysis of (1-&gt;4)-linkages between N-acetyl-beta-D-glucosamine and D-glucuronate residues in hyaluronate.. Its function is as follows. Hydrolyzes high molecular weight hyaluronic acid to produce small oligosaccharides. The polypeptide is Hyaluronidase A (Vespula vulgaris (Yellow jacket)).